The chain runs to 156 residues: Transcriptional repressor NrdR (156 aa).

A zinc finger spans residues 3–34; sequence CPKCNSTHSRVVDSRHADEVNAIRRRRECEEC. The ATP-cone domain occupies 49–139; the sequence is LIVVKKDGTR…VYKEFKDVDQ (91 aa).

The protein belongs to the NrdR family. The cofactor is Zn(2+).

Its function is as follows. Negatively regulates transcription of bacterial ribonucleotide reductase nrd genes and operons by binding to NrdR-boxes. The chain is Transcriptional repressor NrdR from Staphylococcus saprophyticus subsp. saprophyticus (strain ATCC 15305 / DSM 20229 / NCIMB 8711 / NCTC 7292 / S-41).